Here is a 592-residue protein sequence, read N- to C-terminus: Frizzled-5 (592 aa).

Positions 1–38 (MRKPADEHHFTMETSGMHLVGFWLHVLLLFQLSGLGDS) are cleaved as a signal peptide. The Extracellular portion of the chain corresponds to 39-248 (ASKDIVCEPI…QDERTFTTFW (210 aa)). The 122-residue stretch at 40–161 (SKDIVCEPIT…GDTDRLCMDR (122 aa)) folds into the FZ domain. Disulfide bonds link C45-C106, C53-C99, C90-C128, C117-C158, and C121-C145. The segment at 162–192 (NSSETTTLSPPFPKPTPKGTPRHRATAKSAP) is disordered. The chain crosses the membrane as a helical span at residues 249 to 269 (IGLWSVLCFVSTFTTVATFLI). Residues 270-280 (DMERFKYPERP) are Cytoplasmic-facing. The helical transmembrane segment at 281-301 (IIFLAACYLFVSLGYIVRLLA) threads the bilayer. At 302–327 (GHERVACEGTGDQQHILYDTTGPALC) the chain is on the extracellular side. Residues 328-348 (TLVFLLIYFFGMASSIWWVVL) traverse the membrane as a helical segment. The Cytoplasmic portion of the chain corresponds to 349 to 370 (SFTWFLAAGMKWGNEAIAGYSQ). A helical membrane pass occupies residues 371–391 (YFHLAAWLVPSVKSIAVLALS). Residues 392–414 (SVDGDPVAGICYVGNQSLEGLRG) lie on the Extracellular side of the membrane. The helical transmembrane segment at 415-435 (FVLAPLVVYLFTGSLFLLAGF) threads the bilayer. The Cytoplasmic segment spans residues 436–461 (VSLFRIRSVIKQGGTKTDKLEKLMIR). A helical membrane pass occupies residues 462-482 (IGLFTVLYTVPATIVVACLVY). The Extracellular portion of the chain corresponds to 483–512 (EQHYRPSWERALACSCPSERQRLGMGPDYA). A helical transmembrane segment spans residues 513-533 (VFMLKYFMCLVVGITSGVWIW). Residues 534–592 (SGKTLESWRRFIARYVPCRTRKPPVSASSMYSEASTALTARAGTAPTGTYHKSAPSSHV) are Cytoplasmic-facing.

The protein belongs to the G-protein coupled receptor Fz/Smo family.

The protein resides in the cell membrane. Its subcellular location is the golgi apparatus membrane. It is found in the synapse. It localises to the perikaryon. The protein localises to the cell projection. The protein resides in the dendrite. Its subcellular location is the axon. Receptor for Wnt proteins. Following binding, activates the canonical Wnt/beta-catenin signaling pathway. Also activates wnt non-canonical signaling. In neurons, activation of the Wnt pathway promotes formation of synapses. May be involved in transduction and intercellular transmission of polarity information during tissue morphogenesis and/or in differentiated tissues. Plays a role in early eye development, possibly through wnt non-canonical signaling. As a receptor for wnt11, promotes eye formation, at least partially, by antagonizing the Wnt/beta-catenin pathway. In addition, promotes coherence of eye field cells, potentially contributing to the coordinated morphogenetic behaviors of cells in the nascent eye field. In Danio rerio (Zebrafish), this protein is Frizzled-5 (fzd5).